The following is a 457-amino-acid chain: Dihydrolipoyl dehydrogenase (457 aa).

Residues 32-40 (EKQYFGGVC), Lys49, and Ala113 each bind FAD. Cys40 and Cys45 are disulfide-bonded. Residues 178-182 (GGGVI), Val235, and 262-265 (SIGR) contribute to the NAD(+) site. The FAD site is built by Asp303 and Ala311. His437 serves as the catalytic Proton acceptor.

This sequence belongs to the class-I pyridine nucleotide-disulfide oxidoreductase family. Homodimer. The cofactor is FAD.

Its subcellular location is the cytoplasm. It catalyses the reaction N(6)-[(R)-dihydrolipoyl]-L-lysyl-[protein] + NAD(+) = N(6)-[(R)-lipoyl]-L-lysyl-[protein] + NADH + H(+). Functionally, lipoamide dehydrogenase is a component of the alpha-ketoacid dehydrogenase complexes. The protein is Dihydrolipoyl dehydrogenase (pdhD) of Mycoplasma genitalium (strain ATCC 33530 / DSM 19775 / NCTC 10195 / G37) (Mycoplasmoides genitalium).